Here is a 187-residue protein sequence, read N- to C-terminus: Chromophore lyase CpcS/CpeS 2 (187 aa).

The protein belongs to the CpcS/CpeS biliprotein lyase family.

Its function is as follows. Covalently attaches a chromophore to Cys residue(s) of phycobiliproteins. In Synechococcus sp. (strain JA-3-3Ab) (Cyanobacteria bacterium Yellowstone A-Prime), this protein is Chromophore lyase CpcS/CpeS 2.